A 141-amino-acid polypeptide reads, in one-letter code: Secreted RxLR effector protein 69 (141 aa).

Positions 1–19 (MHSSTILFVLGAAILAVNG) are cleaved as a signal peptide. The short motif at 38 to 53 (RLLRSNLMKHETGEER) is the RxLR-dEER element. A glycan (N-linked (GlcNAc...) asparagine) is linked at N120.

This sequence belongs to the RxLR effector family.

It localises to the secreted. The protein resides in the host nucleus. Its function is as follows. Secreted effector that completely suppresses the host cell death induced by cell death-inducing proteins. This chain is Secreted RxLR effector protein 69, found in Plasmopara viticola (Downy mildew of grapevine).